The chain runs to 199 residues: NAD(P)H-quinone oxidoreductase chain 6 (199 aa).

Transmembrane regions (helical) follow at residues 9–29 (IVSF…VVLL), 32–52 (VVYS…LYLL), 61–81 (AQVL…IMLV), 102–122 (LVCA…PWAI), and 143–163 (FLLP…GAIV).

This sequence belongs to the complex I subunit 6 family.

It is found in the membrane. The enzyme catalyses a plastoquinone + NADH + (n+1) H(+)(in) = a plastoquinol + NAD(+) + n H(+)(out). It carries out the reaction a plastoquinone + NADPH + (n+1) H(+)(in) = a plastoquinol + NADP(+) + n H(+)(out). Its function is as follows. NDH-1 shuttles electrons from NAD(P)H, via FMN and iron-sulfur (Fe-S) centers, to quinones in the respiratory chain. The immediate electron acceptor for the enzyme in this species is believed to be plastoquinone. Couples the redox reaction to proton translocation (for every two electrons transferred, four hydrogen ions are translocated across the cytoplasmic membrane), and thus conserves the redox energy in a proton gradient. The chain is NAD(P)H-quinone oxidoreductase chain 6 (ndhG) from Leptolyngbya boryana (Plectonema boryanum).